The chain runs to 73 residues: MNKKTLLVIFFITMLIVDEVNSFKIGGFIKKLWRSKLAKKLRAKGRELLKDYANRVINGGPEEEAAVPAERRR.

The N-terminal stretch at 1–22 (MNKKTLLVIFFITMLIVDEVNS) is a signal peptide.

It belongs to the non-disulfide-bridged peptide (NDBP) superfamily. Long chain multifunctional peptide (group 2) family. As to expression, expressed by the venom gland.

It localises to the secreted. The protein localises to the target cell membrane. Its function is as follows. Amphipathic peptide that displays potent antimicrobial activities against a range of Gram-positive and Gram-negative planktonic bacteria with MIC values in the range 5 uM to 10 uM. In more details, it is active on Listeria ivanovii (MIC=5 uM), Staphylococcus epidermidis (MIC=10 uM), Salmonella enterica (MIC=5 uM), Pseudomonas aeruginosa (ATCC 27853) (MIC=5 uM), Acinetobacter baumannii (MIC=5 uM), Klebsiella pneumoniae (MIC=5 uM), Escherichia coli (MIC=7.5 uM), Salmonella typhimurium (MIC=7.5 uM), Pseudomonas aeruginosa (ATCC 9027) (MIC=10 uM). Is also able to prevent P.aeruginosa biofilm formation while showing weak hemolytic activity towards human erythrocytes. Probably induces bacterial cell death through membrane permeabilization. Moreover, shows DNA-binding activities. Also exerts potent selective cytotoxic and antiproliferative activity against three different prostate cancer cell lines (IC(50)=4.4-7.8 uM), compared to non-tumorigenic cell lines (IC(50)=59.7 uM in Vero and 62.5 uM in HUVEC cells). This peptide possibly exerts its cytotoxic activity through a necrotic mode of cell death. Only shows diminished hemolytic activity against sheep erythrocytes. Does not induce cell death through apoptosis and consequently is not acting upon an intracellular target. The polypeptide is Mauriporin (Androctonus mauritanicus (Fat-tailed scorpion)).